The chain runs to 151 residues: Leukocyte cell-derived chemotaxin-2 (151 aa).

The N-terminal stretch at 1–18 (MFSTKALLLAGLISTALA) is a signal peptide. 3 cysteine pairs are disulfide-bonded: cysteine 25–cysteine 60, cysteine 36–cysteine 41, and cysteine 99–cysteine 142. Residues histidine 53, aspartate 57, and histidine 138 each coordinate Zn(2+).

The protein belongs to the LECT2/MIM-1 family. Interacts with MET. In terms of tissue distribution, highly expressed in adult and fetal liver and weakly in testis. Not expressed in bone marrow.

The protein localises to the cytoplasm. Its subcellular location is the secreted. Has a neutrophil chemotactic activity. Also a positive regulator of chondrocyte proliferation. Does not show metalloendopeptidase activity. The sequence is that of Leukocyte cell-derived chemotaxin-2 (LECT2) from Homo sapiens (Human).